Reading from the N-terminus, the 1133-residue chain is Exportin-4 (1133 aa).

This sequence belongs to the exportin family. Interacts with Ran and cargo proteins in a GTP-dependent manner.

It is found in the cytoplasm. Its subcellular location is the nucleus. Mediates the nuclear export of proteins (cargos). In the nucleus binds cooperatively to its cargo and to the GTPase Ran in its active GTP-bound form. Docking of this trimeric complex to the nuclear pore complex (NPC) is mediated through binding to nucleoporins. Upon transit of a nuclear export complex into the cytoplasm, disassembling of the complex and hydrolysis of Ran-GTP to Ran-GDP cause release of the cargo from the export receptor. Xpo4 then return to the nuclear compartment and mediate another round of transport. The directionality of nuclear export is thought to be conferred by an asymmetric distribution of the GTP- and GDP-bound forms of Ran between the cytoplasm and nucleus. The polypeptide is Exportin-4 (xpo4) (Dictyostelium discoideum (Social amoeba)).